Reading from the N-terminus, the 64-residue chain is Large ribosomal subunit protein bL35 (64 aa).

The span at 1 to 26 (MPKMKTKSAAAKRFKTTKSGKIKRKQ) shows a compositional bias: basic residues. Residues 1 to 46 (MPKMKTKSAAAKRFKTTKSGKIKRKQAYTSHLAPNKTTKQKRHLRK) are disordered.

It belongs to the bacterial ribosomal protein bL35 family.

In Mycoplasmoides gallisepticum (strain R(low / passage 15 / clone 2)) (Mycoplasma gallisepticum), this protein is Large ribosomal subunit protein bL35.